A 291-amino-acid chain; its full sequence is 33 kDa chaperonin (291 aa).

Intrachain disulfides connect Cys237–Cys239 and Cys270–Cys273.

It belongs to the HSP33 family. Under oxidizing conditions two disulfide bonds are formed involving the reactive cysteines. Under reducing conditions zinc is bound to the reactive cysteines and the protein is inactive.

The protein resides in the cytoplasm. Functionally, redox regulated molecular chaperone. Protects both thermally unfolding and oxidatively damaged proteins from irreversible aggregation. Plays an important role in the bacterial defense system toward oxidative stress. The chain is 33 kDa chaperonin from Bacillus anthracis (strain A0248).